We begin with the raw amino-acid sequence, 143 residues long: Transcriptional regulator MraZ (143 aa).

SpoVT-AbrB domains follow at residues 5-47 and 76-119; these read SHTP…PLAE and ASDD…DSQR.

It belongs to the MraZ family. In terms of assembly, forms oligomers.

Its subcellular location is the cytoplasm. The protein resides in the nucleoid. This chain is Transcriptional regulator MraZ, found in Parafrankia sp. (strain EAN1pec).